A 354-amino-acid chain; its full sequence is Histidinol-phosphate aminotransferase (354 aa).

Residue Lys210 is modified to N6-(pyridoxal phosphate)lysine.

It belongs to the class-II pyridoxal-phosphate-dependent aminotransferase family. Histidinol-phosphate aminotransferase subfamily. As to quaternary structure, homodimer. Pyridoxal 5'-phosphate serves as cofactor.

It carries out the reaction L-histidinol phosphate + 2-oxoglutarate = 3-(imidazol-4-yl)-2-oxopropyl phosphate + L-glutamate. It participates in amino-acid biosynthesis; L-histidine biosynthesis; L-histidine from 5-phospho-alpha-D-ribose 1-diphosphate: step 7/9. This is Histidinol-phosphate aminotransferase from Clostridium botulinum (strain 657 / Type Ba4).